Here is a 1084-residue protein sequence, read N- to C-terminus: Cellulose synthase A catalytic subunit 2 [UDP-forming] (1084 aa).

Met1 carries the post-translational modification N-acetylmethionine. Over 1–278 the chain is Cytoplasmic; it reads MNTGGRLIAG…RSSRINPYRM (278 aa). Positions 39, 42, 58, 61, 66, 69, 81, and 84 each coordinate Zn(2+). The segment at 39-85 adopts an RING-type; degenerate zinc-finger fold; the sequence is CQICGDEIELTVSSELFVACNECAFPVCRPCYEYERREGNQACPQCK. Positions 230–259 are disordered; the sequence is IKHEGGNNGRGSNDDDELDDPDMPMMDEGR. A helical membrane pass occupies residues 279–299; sequence LILCRLAILGLFFHYRILHPV. The Extracellular portion of the chain corresponds to 300 to 301; that stretch reads ND. The helical transmembrane segment at 302-322 threads the bilayer; sequence AYGLWLTSVICEIWFAVSWIL. At 323 to 867 the chain is on the cytoplasmic side; sequence DQFPKWYPIE…INSVVYPWTS (545 aa). Residues Ser361, Lys367, Glu368, and Asp397 each contribute to the UDP-alpha-D-glucose site. Asp397 is an active-site residue. Residues 451–477 adopt a coiled-coil conformation; that stretch reads VRERRAMKRDYEEFKVKINALVATAQK. Residue Lys538 participates in UDP-alpha-D-glucose binding. Residues Lys539 and Asp563 each contribute to the Mn(2+) site. The active site involves Asp784. The helical transmembrane segment at 868–888 threads the bilayer; that stretch reads LPLIVYCSLPAVCLLTGKFIV. At 889–893 the chain is on the extracellular side; the sequence is PEISN. The chain crosses the membrane as a helical span at residues 894 to 914; that stretch reads YAGILFMLMFISIAVTGILEM. The Cytoplasmic segment spans residues 915–929; sequence QWGGVGIDDWWRNEQ. The helical transmembrane segment at 930-950 threads the bilayer; sequence FWVIGGASSHLFALFQGLLKV. The Extracellular segment spans residues 951–979; the sequence is LAGVNTNFTVTSKAADDGAFSELYIFKWT. A glycan (N-linked (GlcNAc...) asparagine) is linked at Asn957. The chain crosses the membrane as a helical span at residues 980-1000; sequence TLLIPPTTLLIINIIGVIVGV. At 1001 to 1011 the chain is on the cytoplasmic side; it reads SDAISNGYDSW. The helical transmembrane segment at 1012–1032 threads the bilayer; sequence GPLFGRLFFALWVIVHLYPFL. Topologically, residues 1033–1041 are extracellular; the sequence is KGMLGKQDK. Residues 1042–1062 traverse the membrane as a helical segment; the sequence is MPTIIVVWSILLASILTLLWV. The Cytoplasmic segment spans residues 1063–1084; it reads RVNPFVAKGGPVLEICGLNCGN.

The protein belongs to the glycosyltransferase 2 family. Plant cellulose synthase subfamily. In terms of assembly, homodimer. Interaction through zinc finger domain. Mn(2+) serves as cofactor. Zn(2+) is required as a cofactor. Strongly and ubiquitously expressed. Localized in some dividing and expanding cells, as well as in vascular tissues.

The protein localises to the cell membrane. It catalyses the reaction [(1-&gt;4)-beta-D-glucosyl](n) + UDP-alpha-D-glucose = [(1-&gt;4)-beta-D-glucosyl](n+1) + UDP + H(+). It participates in glycan metabolism; plant cellulose biosynthesis. Catalytic subunit of cellulose synthase terminal complexes ('rosettes'), required for beta-1,4-glucan microfibril crystallization, a major mechanism of the cell wall formation. Involved in the primary cell wall formation. This chain is Cellulose synthase A catalytic subunit 2 [UDP-forming], found in Arabidopsis thaliana (Mouse-ear cress).